We begin with the raw amino-acid sequence, 428 residues long: Histidine--tRNA ligase (428 aa).

This sequence belongs to the class-II aminoacyl-tRNA synthetase family. As to quaternary structure, homodimer.

It is found in the cytoplasm. It catalyses the reaction tRNA(His) + L-histidine + ATP = L-histidyl-tRNA(His) + AMP + diphosphate + H(+). This is Histidine--tRNA ligase from Lactobacillus delbrueckii subsp. bulgaricus (strain ATCC 11842 / DSM 20081 / BCRC 10696 / JCM 1002 / NBRC 13953 / NCIMB 11778 / NCTC 12712 / WDCM 00102 / Lb 14).